A 279-amino-acid chain; its full sequence is tRNA pseudouridine synthase A (279 aa).

The Nucleophile role is filled by aspartate 54. Tyrosine 112 provides a ligand contact to substrate.

It belongs to the tRNA pseudouridine synthase TruA family. Homodimer.

The catalysed reaction is uridine(38/39/40) in tRNA = pseudouridine(38/39/40) in tRNA. Functionally, formation of pseudouridine at positions 38, 39 and 40 in the anticodon stem and loop of transfer RNAs. The polypeptide is tRNA pseudouridine synthase A (Cutibacterium acnes (strain DSM 16379 / KPA171202) (Propionibacterium acnes)).